We begin with the raw amino-acid sequence, 59 residues long: Large ribosomal subunit protein uL30 (59 aa).

This sequence belongs to the universal ribosomal protein uL30 family. In terms of assembly, part of the 50S ribosomal subunit.

The polypeptide is Large ribosomal subunit protein uL30 (Edwardsiella ictaluri (strain 93-146)).